The sequence spans 248 residues: PF03932 family protein CutC (248 aa).

The protein belongs to the CutC family.

It localises to the cytoplasm. The protein is PF03932 family protein CutC of Photorhabdus laumondii subsp. laumondii (strain DSM 15139 / CIP 105565 / TT01) (Photorhabdus luminescens subsp. laumondii).